The sequence spans 666 residues: uncharacterized protein (666 aa).

This is an uncharacterized protein from Acanthamoeba polyphaga mimivirus (APMV).